The primary structure comprises 471 residues: V-type ATP synthase beta chain (471 aa).

This sequence belongs to the ATPase alpha/beta chains family.

In terms of biological role, produces ATP from ADP in the presence of a proton gradient across the membrane. The V-type beta chain is a regulatory subunit. In Streptococcus pyogenes serotype M12 (strain MGAS2096), this protein is V-type ATP synthase beta chain.